A 167-amino-acid polypeptide reads, in one-letter code: Cytochrome b6-f complex subunit 4 (167 aa).

The next 3 helical transmembrane spans lie at 36–56, 95–115, and 131–151; these read LLYISPVVILGTIACNVGLAV, LLGVLLMVLVPTGLLTVPFLE, and TVFLIGTAVALWLGIGATLPI.

Belongs to the cytochrome b family. PetD subfamily. In terms of assembly, the 4 large subunits of the cytochrome b6-f complex are cytochrome b6, subunit IV (17 kDa polypeptide, petD), cytochrome f and the Rieske protein, while the 4 small subunits are petG, petL, petM and petN. The complex functions as a dimer.

The protein resides in the plastid. It is found in the chloroplast thylakoid membrane. Its function is as follows. Component of the cytochrome b6-f complex, which mediates electron transfer between photosystem II (PSII) and photosystem I (PSI), cyclic electron flow around PSI, and state transitions. The sequence is that of Cytochrome b6-f complex subunit 4 from Calycanthus floridus var. glaucus (Eastern sweetshrub).